Here is a 223-residue protein sequence, read N- to C-terminus: Putative germin-like protein 2-3 (223 aa).

Positions Met1–Ala28 are cleaved as a signal peptide. The cysteines at positions 38 and 53 are disulfide-linked. A Cupin type-1 domain is found at Ser67–Asp217. A glycan (N-linked (GlcNAc...) asparagine) is linked at Asn74. His115, His117, Glu122, and His163 together coordinate Mn(2+).

Belongs to the germin family. As to quaternary structure, oligomer (believed to be a pentamer but probably hexamer).

The protein localises to the secreted. The protein resides in the extracellular space. It is found in the apoplast. In terms of biological role, may play a role in plant defense. Probably has no oxalate oxidase activity even if the active site is conserved. The protein is Putative germin-like protein 2-3 of Oryza sativa subsp. japonica (Rice).